The chain runs to 312 residues: Elongation factor Ts (312 aa).

An involved in Mg(2+) ion dislocation from EF-Tu region spans residues 80 to 83 (TDFV).

The protein belongs to the EF-Ts family.

The protein resides in the cytoplasm. In terms of biological role, associates with the EF-Tu.GDP complex and induces the exchange of GDP to GTP. It remains bound to the aminoacyl-tRNA.EF-Tu.GTP complex up to the GTP hydrolysis stage on the ribosome. This is Elongation factor Ts from Paramagnetospirillum magneticum (strain ATCC 700264 / AMB-1) (Magnetospirillum magneticum).